A 140-amino-acid chain; its full sequence is UPF0225 protein SAV_6631 (140 aa).

Residues 1–22 (MSKSRRTRSTSRPTSRPQPASC) are disordered. Over residues 10 to 19 (TSRPTSRPQP) the composition is skewed to low complexity.

The protein belongs to the UPF0225 family.

The chain is UPF0225 protein SAV_6631 from Streptomyces avermitilis (strain ATCC 31267 / DSM 46492 / JCM 5070 / NBRC 14893 / NCIMB 12804 / NRRL 8165 / MA-4680).